A 178-amino-acid polypeptide reads, in one-letter code: Small ribosomal subunit protein uS5 (178 aa).

Residues 15 to 78 (FEEKIIEIRR…SAAKRNIIEV (64 aa)) enclose the S5 DRBM domain.

Belongs to the universal ribosomal protein uS5 family. In terms of assembly, part of the 30S ribosomal subunit. Contacts proteins S4 and S8.

Functionally, with S4 and S12 plays an important role in translational accuracy. Its function is as follows. Located at the back of the 30S subunit body where it stabilizes the conformation of the head with respect to the body. This is Small ribosomal subunit protein uS5 from Thermotoga sp. (strain RQ2).